Consider the following 431-residue polypeptide: Serine/threonine-protein kinase Sgk1 (431 aa).

The necessary for localization to the mitochondria stretch occupies residues 1-60; it reads MTVKAEAARSTLTYSRMRGMVAILIAFMKQRRMGLNDFIQKIASNTYACKHAEVQSILKM. Positions 65–92 are disordered; the sequence is EPELMNANPSPPPSPSQQINLGPSSNPH. Ser74 carries the phosphoserine modification. Position 78 is a phosphoserine; by MAPK7 (Ser78). Residues 81–91 show a composition bias toward polar residues; sequence QQINLGPSSNP. The 258-residue stretch at 98–355 folds into the Protein kinase domain; sequence FHFLKVIGKG…FMEIKSHIFF (258 aa). ATP is bound by residues 104–112 and Lys127; that span reads IGKGSFGKV. Positions 131–141 match the Nuclear localization signal motif; that stretch reads KKAILKKKEEK. The Proton acceptor role is filled by Asp222. Thr256 is subject to Phosphothreonine; by PDPK1. The region spanning 356–431 is the AGC-kinase C-terminal domain; that stretch reads SLINWDDLIN…SYAPPVDSFL (76 aa). At Thr369 the chain carries Phosphothreonine; by PKA. Residues Ser397, Ser401, and Ser422 each carry the phosphoserine modification.

Belongs to the protein kinase superfamily. AGC Ser/Thr protein kinase family. As to quaternary structure, homodimer; disulfide-linked. Interacts with MAPK3/ERK1, MAPK1/ERK2, MAP2K1/MEK1, MAP2K2/MEK2, NEDD4, NEDD4L, MAPT/TAU, MAPK7, CREB1, SLC9A3R2/NHERF2 and KCNJ1/ROMK1. Forms a trimeric complex with FBXW7 and NOTCH1 Associates with the mammalian target of rapamycin complex 2 (mTORC2) via an interaction with MAPKAP1/SIN1. Post-translationally, regulated by phosphorylation. Activated by phosphorylation on Ser-422 by mTORC2, transforming it into a substrate for PDPK1 which phosphorylates it on Thr-256. Phosphorylation on Ser-397 and Ser-401 are also essential for its activity. Phosphorylation on Ser-78 by MAPK7 is required for growth factor-induced cell cycle progression. Ubiquitinated by NEDD4L; which promotes proteasomal degradation. Ubiquitinated by SYVN1 at the endoplasmic reticulum; which promotes rapid proteasomal degradation and maintains a high turnover rate in resting cells.

The protein resides in the cytoplasm. It is found in the nucleus. It localises to the endoplasmic reticulum membrane. The protein localises to the cell membrane. Its subcellular location is the mitochondrion. It carries out the reaction L-seryl-[protein] + ATP = O-phospho-L-seryl-[protein] + ADP + H(+). The enzyme catalyses L-threonyl-[protein] + ATP = O-phospho-L-threonyl-[protein] + ADP + H(+). With respect to regulation, two specific sites, one in the kinase domain (Thr-256) and the other in the C-terminal regulatory region (Ser-422), need to be phosphorylated for its full activation. Phosphorylation at Ser-397 and Ser-401 are also essential for its activity. Activated by WNK1, WNK2, WNK3 and WNK4; which promote phosphorylation by mTORC2. Serine/threonine-protein kinase which is involved in the regulation of a wide variety of ion channels, membrane transporters, cellular enzymes, transcription factors, neuronal excitability, cell growth, proliferation, survival, migration and apoptosis. Plays an important role in cellular stress response. Contributes to regulation of renal Na(+) retention, renal K(+) elimination, salt appetite, gastric acid secretion, intestinal Na(+)/H(+) exchange and nutrient transport, insulin-dependent salt sensitivity of blood pressure, salt sensitivity of peripheral glucose uptake, cardiac repolarization and memory consolidation. Up-regulates Na(+) channels: SCNN1A/ENAC, SCN5A and ASIC1/ACCN2, K(+) channels: KCNJ1/ROMK1, KCNA1-5, KCNQ1-5 and KCNE1, epithelial Ca(2+) channels: TRPV5 and TRPV6, chloride channels: BSND, CLCN2 and CFTR, glutamate transporters: SLC1A3/EAAT1, SLC1A2 /EAAT2, SLC1A1/EAAT3, SLC1A6/EAAT4 and SLC1A7/EAAT5, amino acid transporters: SLC1A5/ASCT2, SLC38A1/SN1 and SLC6A19, creatine transporter: SLC6A8, Na(+)/dicarboxylate cotransporter: SLC13A2/NADC1, Na(+)-dependent phosphate cotransporter: SLC34A2/NAPI-2B, glutamate receptor: GRIK2/GLUR6. Up-regulates carriers: SLC9A3/NHE3, SLC12A1/NKCC2, SLC12A3/NCC, SLC5A3/SMIT, SLC2A1/GLUT1, SLC5A1/SGLT1 and SLC15A2/PEPT2. Regulates enzymes: GSK3A/B, PMM2 and Na(+)/K(+) ATPase, and transcription factors: CTNNB1 and nuclear factor NF-kappa-B. Stimulates sodium transport into epithelial cells by enhancing the stability and expression of SCNN1A/ENAC. This is achieved by phosphorylating the NEDD4L ubiquitin E3 ligase, promoting its interaction with 14-3-3 proteins, thereby preventing it from binding to SCNN1A/ENAC and targeting it for degradation. Regulates store-operated Ca(+2) entry (SOCE) by stimulating ORAI1 and STIM1. Regulates KCNJ1/ROMK1 directly via its phosphorylation or indirectly via increased interaction with SLC9A3R2/NHERF2. Phosphorylates MDM2 and activates MDM2-dependent ubiquitination of p53/TP53. Phosphorylates MAPT/TAU and mediates microtubule depolymerization and neurite formation in hippocampal neurons. Phosphorylates SLC2A4/GLUT4 and up-regulates its activity. Phosphorylates APBB1/FE65 and promotes its localization to the nucleus. Phosphorylates MAPK1/ERK2 and activates it by enhancing its interaction with MAP2K1/MEK1 and MAP2K2/MEK2. Phosphorylates FBXW7 and plays an inhibitory role in the NOTCH1 signaling. Phosphorylates FOXO1 resulting in its relocalization from the nucleus to the cytoplasm. Phosphorylates FOXO3, promoting its exit from the nucleus and interference with FOXO3-dependent transcription. Phosphorylates BRAF and MAP3K3/MEKK3 and inhibits their activity. Phosphorylates SLC9A3/NHE3 in response to dexamethasone, resulting in its activation and increased localization at the cell membrane. Phosphorylates CREB1. Necessary for vascular remodeling during angiogenesis. This Mus musculus (Mouse) protein is Serine/threonine-protein kinase Sgk1 (Sgk1).